The primary structure comprises 544 residues: ATP synthase subunit alpha (544 aa).

173–180 (GDRQTGKT) serves as a coordination point for ATP. The tract at residues 513 to 544 (GSDGQIIGGGEPESDGEDVDVEQEQIVRQKRG) is disordered. Acidic residues predominate over residues 524 to 535 (PESDGEDVDVEQ).

The protein belongs to the ATPase alpha/beta chains family. F-type ATPases have 2 components, CF(1) - the catalytic core - and CF(0) - the membrane proton channel. CF(1) has five subunits: alpha(3), beta(3), gamma(1), delta(1), epsilon(1). CF(0) has three main subunits: a(1), b(2) and c(9-12). The alpha and beta chains form an alternating ring which encloses part of the gamma chain. CF(1) is attached to CF(0) by a central stalk formed by the gamma and epsilon chains, while a peripheral stalk is formed by the delta and b chains.

Its subcellular location is the cell membrane. The catalysed reaction is ATP + H2O + 4 H(+)(in) = ADP + phosphate + 5 H(+)(out). Its function is as follows. Produces ATP from ADP in the presence of a proton gradient across the membrane. The alpha chain is a regulatory subunit. This Beutenbergia cavernae (strain ATCC BAA-8 / DSM 12333 / CCUG 43141 / JCM 11478 / NBRC 16432 / NCIMB 13614 / HKI 0122) protein is ATP synthase subunit alpha.